A 160-amino-acid polypeptide reads, in one-letter code: Aspartate carbamoyltransferase regulatory chain (160 aa).

4 residues coordinate Zn(2+): Cys110, Cys115, Cys140, and Cys143.

The protein belongs to the PyrI family. As to quaternary structure, contains catalytic and regulatory chains. The cofactor is Zn(2+).

In terms of biological role, involved in allosteric regulation of aspartate carbamoyltransferase. The chain is Aspartate carbamoyltransferase regulatory chain from Hyperthermus butylicus (strain DSM 5456 / JCM 9403 / PLM1-5).